A 167-amino-acid polypeptide reads, in one-letter code: Small heat shock protein C1 (167 aa).

The sHSP domain maps to 59–167 (PFYESNSIKS…EQDAKEIPIN (109 aa)).

This sequence belongs to the small heat shock protein (HSP20) family.

The sequence is that of Small heat shock protein C1 (hspC1) from Rickettsia bellii (strain RML369-C).